Reading from the N-terminus, the 624-residue chain is Pentatricopeptide repeat-containing protein At4g31070, mitochondrial (624 aa).

The N-terminal 15 residues, 1 to 15 (MRWVKLGRRVIMSRA), are a transit peptide targeting the mitochondrion. PPR repeat units lie at residues 56–91 (FTAILPSVIKACAFQQEPFLLGAQLHCLCLKAGADC), 92–122 (DTVVSNSLISMYAKFSRKYAVRKVFDEMLHR), 123–157 (DTVSYCSIINSCCQDGLLYEAMKLIKEMYFYGFIP), 158–192 (KSELVASLLALCTRMGSSSKVARMFHALVLVDERM), 195–225 (SVLLSTALVDMYLKFDDHAAAFHVFDQMEVK), 226–260 (NEVSWTAMISGCVANQNYEMGVDLFRAMQRENLRP), 261–296 (NRVTLLSVLPACVELNYGSSLVKEIHGFSFRHGCHA), 297–327 (DERLTAAFMTMYCRCGNVSLSRVLFETSKVR), 328–362 (DVVMWSSMISGYAETGDCSEVMNLLNQMRKEGIEA), 363–397 (NSVTLLAIVSACTNSTLLSFASTVHSQILKCGFMS), 398–428 (HILLGNALIDMYAKCGSLSAAREVFYELTEK), 429–463 (DLVSWSSMINAYGLHGHGSEALEIFKGMIKGGHEV), 464–498 (DDMAFLAILSACNHAGLVEEAQTIFTQAGKYHMPV), and 499–529 (TLEHYACYINLLGRFGKIDDAFEVTINMPMK). The segment at 534–610 (IWSSLLSACE…CYGFSKIEPE (77 aa)) is type E motif.

This sequence belongs to the PPR family. PCMP-E subfamily.

The protein resides in the mitochondrion. The sequence is that of Pentatricopeptide repeat-containing protein At4g31070, mitochondrial (PCMP-E7) from Arabidopsis thaliana (Mouse-ear cress).